A 539-amino-acid polypeptide reads, in one-letter code: Membrane protein insertase YidC (539 aa).

The chain crosses the membrane as a helical span at residues 6-26; that stretch reads VILAVALSFAVLLGWQFLFPP. Positions 28-63 are disordered; it reads PQQPAPAQQEQTAQPNQAVDSSVAGPVSNQLPDPAS. A compositionally biased stretch (low complexity) spans 32–45; that stretch reads APAQQEQTAQPNQA. Residues 54 to 63 are compositionally biased toward polar residues; that stretch reads VSNQLPDPAS. Helical transmembrane passes span 349-369, 421-441, and 496-516; these read YGIA…PLSH, MLLQ…TVAL, and IMMF…SGLV.

This sequence belongs to the OXA1/ALB3/YidC family. Type 1 subfamily. In terms of assembly, interacts with the Sec translocase complex via SecD. Specifically interacts with transmembrane segments of nascent integral membrane proteins during membrane integration.

The protein resides in the cell inner membrane. Required for the insertion and/or proper folding and/or complex formation of integral membrane proteins into the membrane. Involved in integration of membrane proteins that insert both dependently and independently of the Sec translocase complex, as well as at least some lipoproteins. Aids folding of multispanning membrane proteins. In Maridesulfovibrio salexigens (strain ATCC 14822 / DSM 2638 / NCIMB 8403 / VKM B-1763) (Desulfovibrio salexigens), this protein is Membrane protein insertase YidC.